The primary structure comprises 187 residues: Elongation factor P (187 aa).

Lys34 is modified (N6-(3,6-diaminohexanoyl)-5-hydroxylysine).

This sequence belongs to the elongation factor P family. In terms of processing, may be beta-lysylated on the epsilon-amino group of Lys-34 by the combined action of EpmA and EpmB, and then hydroxylated on the C5 position of the same residue by EpmC (if this protein is present). Lysylation is critical for the stimulatory effect of EF-P on peptide-bond formation. The lysylation moiety may extend toward the peptidyltransferase center and stabilize the terminal 3-CCA end of the tRNA. Hydroxylation of the C5 position on Lys-34 may allow additional potential stabilizing hydrogen-bond interactions with the P-tRNA.

It localises to the cytoplasm. It participates in protein biosynthesis; polypeptide chain elongation. Functionally, involved in peptide bond synthesis. Alleviates ribosome stalling that occurs when 3 or more consecutive Pro residues or the sequence PPG is present in a protein, possibly by augmenting the peptidyl transferase activity of the ribosome. Modification of Lys-34 is required for alleviation. The sequence is that of Elongation factor P from Buchnera aphidicola subsp. Schizaphis graminum (strain Sg).